The following is a 241-amino-acid chain: Outer membrane protein A (241 aa).

Transmembrane regions (beta stranded) follow at residues 1 to 8 (LTAKLSYP), 13 to 21 (LDIYTRLGG), 46 to 55 (PVFAGGVEYA), 60 to 67 (IATRLEYQ), and 86 to 94 (MLSVGVSYR). Repeat copies occupy residues 105 to 106 (AP), 107 to 108 (AP), 109 to 110 (AP), and 111 to 112 (AP). The 4 X 2 AA tandem repeats of A-P stretch occupies residues 105 to 112 (APAPAPAP). Positions 114 to 241 (VQTKHFTLKS…RRVEIEVKGV (128 aa)) constitute an OmpA-like domain. An intrachain disulfide couples C215 to C227.

It belongs to the outer membrane OOP (TC 1.B.6) superfamily. OmpA family. Monomer and homodimer.

The protein resides in the cell outer membrane. Functionally, with TolR probably plays a role in maintaining the position of the peptidoglycan cell wall in the periplasm. Acts as a porin with low permeability that allows slow penetration of small solutes; an internal gate slows down solute passage. This Shimwellia blattae (Escherichia blattae) protein is Outer membrane protein A.